Reading from the N-terminus, the 210-residue chain is 3-hydroxy-3-methylglutaryl-coenzyme A reductase 2 (210 aa).

Catalysis depends on charge relay system residues Lys-21 and Asp-97. A helical membrane pass occupies residues 166-186 (LLATIVAGSVLAGELSLMSAI). His-195 (proton donor) is an active-site residue. Residue Asn-199 is glycosylated (N-linked (GlcNAc...) asparagine).

This sequence belongs to the HMG-CoA reductase family.

The protein resides in the endoplasmic reticulum membrane. The protein localises to the mitochondrion membrane. It is found in the plastid membrane. It carries out the reaction (R)-mevalonate + 2 NADP(+) + CoA = (3S)-3-hydroxy-3-methylglutaryl-CoA + 2 NADPH + 2 H(+). It participates in metabolic intermediate biosynthesis; (R)-mevalonate biosynthesis; (R)-mevalonate from acetyl-CoA: step 3/3. Functionally, catalyzes the synthesis of mevalonate. The specific precursor of all isoprenoid compounds present in plants. The sequence is that of 3-hydroxy-3-methylglutaryl-coenzyme A reductase 2 (HMGR2) from Hevea brasiliensis (Para rubber tree).